The chain runs to 361 residues: Phospho-N-acetylmuramoyl-pentapeptide-transferase (361 aa).

Transmembrane regions (helical) follow at residues glycine 27–leucine 47, threonine 72–alanine 92, tyrosine 98–phenylalanine 118, leucine 135–glutamate 155, threonine 169–alanine 189, glycine 200–valine 220, isoleucine 240–proline 260, alanine 263–valine 283, isoleucine 289–valine 309, and glutamine 338–leucine 358.

This sequence belongs to the glycosyltransferase 4 family. MraY subfamily. Mg(2+) is required as a cofactor.

It is found in the cell inner membrane. It carries out the reaction UDP-N-acetyl-alpha-D-muramoyl-L-alanyl-gamma-D-glutamyl-meso-2,6-diaminopimeloyl-D-alanyl-D-alanine + di-trans,octa-cis-undecaprenyl phosphate = di-trans,octa-cis-undecaprenyl diphospho-N-acetyl-alpha-D-muramoyl-L-alanyl-D-glutamyl-meso-2,6-diaminopimeloyl-D-alanyl-D-alanine + UMP. Its pathway is cell wall biogenesis; peptidoglycan biosynthesis. Functionally, catalyzes the initial step of the lipid cycle reactions in the biosynthesis of the cell wall peptidoglycan: transfers peptidoglycan precursor phospho-MurNAc-pentapeptide from UDP-MurNAc-pentapeptide onto the lipid carrier undecaprenyl phosphate, yielding undecaprenyl-pyrophosphoryl-MurNAc-pentapeptide, known as lipid I. The chain is Phospho-N-acetylmuramoyl-pentapeptide-transferase from Dinoroseobacter shibae (strain DSM 16493 / NCIMB 14021 / DFL 12).